The chain runs to 364 residues: Poly(3-hydroxyalkanoate) polymerase subunit PhaE (364 aa).

The tract at residues Ser-322–Asp-364 is disordered. Low complexity predominate over residues Lys-324 to Lys-338.

It belongs to the PHA/PHB synthase family. Type III PhaE subfamily. In terms of assembly, forms a heterodimer with PhaC, which may multimerize in the presence of 3-hydroxybutyryl-CoA.

Its subcellular location is the cytoplasm. It functions in the pathway biopolymer metabolism; poly-(R)-3-hydroxybutanoate biosynthesis. Its function is as follows. Polymerizes D(-)-3-hydroxybutyryl-CoA to create polyhydroxybutyrate (PHB) which consists of thousands of hydroxybutyrate molecules linked end to end. This subunit has no catalytic activity but enhances the activity of PhaC, the catalytic subunit. The polypeptide is Poly(3-hydroxyalkanoate) polymerase subunit PhaE (Thiocystis violacea).